We begin with the raw amino-acid sequence, 243 residues long: PF03932 family protein CutC (243 aa).

It belongs to the CutC family.

It is found in the cytoplasm. In Parabacteroides distasonis (strain ATCC 8503 / DSM 20701 / CIP 104284 / JCM 5825 / NCTC 11152), this protein is PF03932 family protein CutC.